Here is a 299-residue protein sequence, read N- to C-terminus: MNNIIDGKKLAEEIIVKVKAETIKLRNNYNIQPGIAVIIVGDDPASQVYVASKNKKAEECGFLSIKHVVSKETQEKELLQLIATLNSDPKIHGILVQLPLPAHINTNRITQAVAFQKDVDGFHYVNVGKLAANALEDAIIPCTPAGAMMMIEQHCGRDLSGLDAVVVGRSNIVGKPMAALLTAANATVTIAHSRTRDLDDVCRSADILVAAVGRPQMIKKDWIKKDAIVIDVGINRIPAPEKGVGKTHLIGDVDFENVKEKAAAITPVPGGVGPMTIAMLMVNTLKAAARLHNLPIPKF.

Residues 168-170, serine 193, and isoleucine 234 each bind NADP(+); that span reads GRS.

The protein belongs to the tetrahydrofolate dehydrogenase/cyclohydrolase family. Homodimer.

It carries out the reaction (6R)-5,10-methylene-5,6,7,8-tetrahydrofolate + NADP(+) = (6R)-5,10-methenyltetrahydrofolate + NADPH. The catalysed reaction is (6R)-5,10-methenyltetrahydrofolate + H2O = (6R)-10-formyltetrahydrofolate + H(+). It functions in the pathway one-carbon metabolism; tetrahydrofolate interconversion. Catalyzes the oxidation of 5,10-methylenetetrahydrofolate to 5,10-methenyltetrahydrofolate and then the hydrolysis of 5,10-methenyltetrahydrofolate to 10-formyltetrahydrofolate. The chain is Bifunctional protein FolD from Bartonella tribocorum (strain CIP 105476 / IBS 506).